The chain runs to 105 residues: Large ribosomal subunit protein bL21 (105 aa).

This sequence belongs to the bacterial ribosomal protein bL21 family. In terms of assembly, part of the 50S ribosomal subunit. Contacts protein L20.

Its function is as follows. This protein binds to 23S rRNA in the presence of protein L20. The protein is Large ribosomal subunit protein bL21 of Methylobacterium nodulans (strain LMG 21967 / CNCM I-2342 / ORS 2060).